A 715-amino-acid polypeptide reads, in one-letter code: Fatty acid oxidation complex subunit alpha (715 aa).

An enoyl-CoA hydratase/isomerase region spans residues 1–190 (MIYEGKAITV…KVGAVDAVVA (190 aa)). A substrate-binding site is contributed by Asp297. The interval 312-715 (HDVKQAAVLG…MAKNGQRFFN (404 aa)) is 3-hydroxyacyl-CoA dehydrogenase. Residues Met325, Asp344, 401–403 (VVE), Lys408, and Ser430 each bind NAD(+). The active-site For 3-hydroxyacyl-CoA dehydrogenase activity is His451. Residue Asn454 participates in NAD(+) binding. Substrate is bound by residues Asn501 and Tyr660.

It in the N-terminal section; belongs to the enoyl-CoA hydratase/isomerase family. This sequence in the C-terminal section; belongs to the 3-hydroxyacyl-CoA dehydrogenase family. In terms of assembly, heterotetramer of two alpha chains (FadB) and two beta chains (FadA).

It catalyses the reaction a (3S)-3-hydroxyacyl-CoA + NAD(+) = a 3-oxoacyl-CoA + NADH + H(+). It carries out the reaction a (3S)-3-hydroxyacyl-CoA = a (2E)-enoyl-CoA + H2O. The catalysed reaction is a 4-saturated-(3S)-3-hydroxyacyl-CoA = a (3E)-enoyl-CoA + H2O. The enzyme catalyses (3S)-3-hydroxybutanoyl-CoA = (3R)-3-hydroxybutanoyl-CoA. It catalyses the reaction a (3Z)-enoyl-CoA = a 4-saturated (2E)-enoyl-CoA. It carries out the reaction a (3E)-enoyl-CoA = a 4-saturated (2E)-enoyl-CoA. The protein operates within lipid metabolism; fatty acid beta-oxidation. Involved in the aerobic and anaerobic degradation of long-chain fatty acids via beta-oxidation cycle. Catalyzes the formation of 3-oxoacyl-CoA from enoyl-CoA via L-3-hydroxyacyl-CoA. It can also use D-3-hydroxyacyl-CoA and cis-3-enoyl-CoA as substrate. This is Fatty acid oxidation complex subunit alpha from Pseudomonas putida (strain ATCC 700007 / DSM 6899 / JCM 31910 / BCRC 17059 / LMG 24140 / F1).